The sequence spans 122 residues: Large ribosomal subunit protein uL14 (122 aa).

The protein belongs to the universal ribosomal protein uL14 family. In terms of assembly, part of the 50S ribosomal subunit. Forms a cluster with proteins L3 and L19. In the 70S ribosome, L14 and L19 interact and together make contacts with the 16S rRNA in bridges B5 and B8.

Functionally, binds to 23S rRNA. Forms part of two intersubunit bridges in the 70S ribosome. The protein is Large ribosomal subunit protein uL14 of Corynebacterium aurimucosum (strain ATCC 700975 / DSM 44827 / CIP 107346 / CN-1) (Corynebacterium nigricans).